The primary structure comprises 65 residues: Large ribosomal subunit protein bL32 (65 aa).

Over residues 1–19 the composition is skewed to basic residues; it reads MAIVPKRKTSKQRKHKRQS. The interval 1 to 21 is disordered; it reads MAIVPKRKTSKQRKHKRQSHS.

Belongs to the bacterial ribosomal protein bL32 family.

In Mesomycoplasma hyopneumoniae (strain 7448) (Mycoplasma hyopneumoniae), this protein is Large ribosomal subunit protein bL32.